Here is a 222-residue protein sequence, read N- to C-terminus: Cytochrome b6 (222 aa).

Residues 39–59 (IFYCLGGITLVCFIIQFATGF) form a helical membrane-spanning segment. Heme c is bound at residue cysteine 42. Heme b is bound by residues histidine 93 and histidine 107. 3 helical membrane-spanning segments follow: residues 97 to 117 (ASMM…TGGF), 123 to 143 (LTWI…VTGY), and 193 to 213 (LHTF…FLMI). 2 residues coordinate heme b: histidine 194 and histidine 209.

The protein belongs to the cytochrome b family. PetB subfamily. As to quaternary structure, the 4 large subunits of the cytochrome b6-f complex are cytochrome b6, subunit IV (17 kDa polypeptide, PetD), cytochrome f and the Rieske protein, while the 4 small subunits are PetG, PetL, PetM and PetN. The complex functions as a dimer. The cofactor is heme b. It depends on heme c as a cofactor.

Its subcellular location is the cellular thylakoid membrane. Functionally, component of the cytochrome b6-f complex, which mediates electron transfer between photosystem II (PSII) and photosystem I (PSI), cyclic electron flow around PSI, and state transitions. The sequence is that of Cytochrome b6 from Prochlorothrix hollandica.